We begin with the raw amino-acid sequence, 377 residues long: Compound eye opsin BCRH1 (377 aa).

Residues 1 to 53 lie on the Extracellular side of the membrane; that stretch reads MANVTGPQMAFYGSGAATFGYPEGMTVADFVPDRVKHMVLDHWYNYPPVNPMW. N-linked (GlcNAc...) asparagine glycosylation occurs at N3. Residues 54 to 78 form a helical membrane-spanning segment; the sequence is HYLLGVVYLFLGVISIAGNGLVIYL. The Cytoplasmic segment spans residues 79-90; the sequence is YMKSQALKTPAN. The chain crosses the membrane as a helical span at residues 91-115; it reads MLIVNLALSDLIMLTTNFPPFCYNC. Over 116 to 131 the chain is Extracellular; it reads FSGGRWMFSGTYCEIY. C128 and C205 are oxidised to a cystine. A helical membrane pass occupies residues 132 to 151; it reads AALGAITGVCSIWTLCMISF. Over 152 to 170 the chain is Cytoplasmic; the sequence is DRYNIICNGFNGPKLTQGK. The chain crosses the membrane as a helical span at residues 171–194; that stretch reads ATFMCGLAWVISVGWSLPPFFGWG. The Extracellular segment spans residues 195-218; the sequence is SYTLEGILDSCSYDYFTRDMNTIT. The chain crosses the membrane as a helical span at residues 219–246; it reads YNICIFIFDFFLPASVIVFSYVFIVKAI. Over 247 to 281 the chain is Cytoplasmic; the sequence is FAHEAAMRAQAKKMNVTNLRSNEAETQRAEIRIAK. A helical membrane pass occupies residues 282 to 305; sequence TALVNVSLWFICWTPYAAITIQGL. Over 306-313 the chain is Extracellular; it reads LGNAEGIT. The chain crosses the membrane as a helical span at residues 314–338; sequence PLLTTLPALLAKSCSCYNPFVYAIS. The residue at position 325 (K325) is an N6-(retinylidene)lysine. At 339-377 the chain is on the cytoplasmic side; that stretch reads HPKFRLAITQHLPWFCVHEKDPNDVEENQSSNTQTQEKS.

The protein belongs to the G-protein coupled receptor 1 family. Opsin subfamily. Post-translationally, phosphorylated on some or all of the serine and threonine residues present in the C-terminal region. In terms of tissue distribution, expressed in all of the seven retinular cells (R1-R7) forming the main rhabdom in each ommatidium.

The protein localises to the membrane. Functionally, visual pigments are the light-absorbing molecules that mediate vision. They consist of an apoprotein, opsin, covalently linked to cis-retinal. This opsin produces visual pigments with maximal absorption in the blue-green region of the spectrum. In Hemigrapsus sanguineus (Asian shore crab), this protein is Compound eye opsin BCRH1.